Consider the following 227-residue polypeptide: Bone marrow proteoglycan (227 aa).

A signal peptide spans 1–16 (MKFPLLLALLVGGAFA). Positions 17–110 (LHLSSEASDS…TSLMGDSGFK (94 aa)) are cleaved as a propeptide — acidic. A disordered region spans residues 21–105 (SEASDSKSPL…KEEDTTSLMG (85 aa)). Serine 24 carries O-linked (GalNAc...) serine glycosylation. A compositionally biased stretch (basic and acidic residues) spans 34 to 46 (SLPREAEISRPEV). Residues 58–70 (LEEEEEEEEEEGS) show a composition bias toward acidic residues. Serine 70 carries an O-linked (Xyl...) (chondroitin sulfate) serine glycan. In terms of domain architecture, C-type lectin spans 128 to 227 (LVCRSCYRGT…GKRRPFICAY (100 aa)). 2 cysteine pairs are disulfide-bonded: cysteine 130–cysteine 225 and cysteine 202–cysteine 217.

Nitrated.

Its subcellular location is the secreted. Functionally, cytotoxin and helminthotoxin. MBP also induces non-cytolytic histamine release from basophils. It is involved in antiparasitic defense mechanisms and immune hypersensitivity reactions. The polypeptide is Bone marrow proteoglycan (Prg2) (Rattus norvegicus (Rat)).